Reading from the N-terminus, the 419-residue chain is DNA ligase (419 aa).

The NTD stretch occupies residues 1-120; it reads MLNQFPGQYS…ARQKRGAHTN (120 aa). Residues 121 to 317 are AD domain; it reads RGMIPPMLVK…NYHSAHLAKL (197 aa). Positions 149, 151, 203, and 232 each coordinate ATP. Lys151 functions as the N6-AMP-lysine intermediate in the catalytic mechanism. Glu203 serves as a coordination point for a divalent metal cation. Glu291 lines the a divalent metal cation pocket. 2 residues coordinate ATP: Ile294 and Lys316. An OB domain region spans residues 318-419; the sequence is KPLLDAEFIL…REPINVLEII (102 aa).

This sequence belongs to the ATP-dependent DNA ligase family. Requires a divalent metal cation as cofactor.

It localises to the virion. It carries out the reaction ATP + (deoxyribonucleotide)n-3'-hydroxyl + 5'-phospho-(deoxyribonucleotide)m = (deoxyribonucleotide)n+m + AMP + diphosphate.. Its function is as follows. Very low-fidelity DNA ligase that seals nicks in double-stranded DNA during DNA repair. Together with the viral repair DNA polymerase X, fills the single nucleotide gaps generated by the AP endonuclease. It is not essential for viral replication and recombination. Displays a very low adenylation activity towards DNA with 3'-dideoxy- or 3'-amino-terminated nicks compared to regular nick DNA. The sequence is that of DNA ligase (LIG) from Ornithodoros (relapsing fever ticks).